Here is a 132-residue protein sequence, read N- to C-terminus: Large ribosomal subunit protein uL14 (132 aa).

It belongs to the universal ribosomal protein uL14 family. As to quaternary structure, part of the 50S ribosomal subunit. Forms a cluster with proteins L3 and L24e, part of which may contact the 16S rRNA in 2 intersubunit bridges.

Its function is as follows. Binds to 23S rRNA. Forms part of two intersubunit bridges in the 70S ribosome. In Methanococcus maripaludis (strain C7 / ATCC BAA-1331), this protein is Large ribosomal subunit protein uL14.